Here is a 211-residue protein sequence, read N- to C-terminus: Mitotic spindle assembly checkpoint protein MAD2B (211 aa).

In terms of domain architecture, HORMA spans glutamine 13–valine 203. A mediates interaction with REV1 and REV3L and homodimerization region spans residues glutamate 21 to alanine 155.

In terms of assembly, homooligomer. Heterodimer with REV3L. This dimer forms the minimal DNA polymerase zeta complex (Pol-zeta2), with REV3L bearing DNA polymerase catalytic activity, although its activity is very low in this context. Component of the tetrameric Pol-zeta complex (Pol-zeta4), which consists of REV3L, MAD2L2, POLD2 and POLD3; Pol-zeta4 is the fully active form of DNA polymerase zeta. Component of the shieldin complex, consisting of SHLD1, SHLD2, SHLD3 and MAD2L2/REV7. Within the complex, SHLD2 forms a scaffold which interacts with a SHLD3-MAD2L2 subcomplex via its N-terminus, and with SHLD1 via its C-terminus. Interacts with REV1. Interacts with ADAM9. Interacts with CHAMP1. Interacts with FZR1 (in complex with the anaphase promoting complex APC). May interact with CDC20. Interacts with RAN. Interacts with ELK1; the interaction is direct and recruits MAD2L2 to ELK1-specific promoters. May interact with the JNK kinases MAPK8 and/or MAPK9 to stimulate ELK1 phosphorylation and transcriptional activity upon DNA damage. Interacts with TCF7L2; prevents its binding to promoters and negatively modulates its transcriptional activity. Interacts with YY1AP1. Interacts with PRCC; the interaction is direct. Interacts with POGZ. Interacts with ASTE1.

The protein localises to the nucleus. It localises to the cytoplasm. Its subcellular location is the cytoskeleton. It is found in the spindle. Functionally, adapter protein able to interact with different proteins and involved in different biological processes. Mediates the interaction between the error-prone DNA polymerase zeta catalytic subunit REV3L and the inserter polymerase REV1, thereby mediating the second polymerase switching in translesion DNA synthesis. Translesion DNA synthesis releases the replication blockade of replicative polymerases, stalled in presence of DNA lesions. Component of the shieldin complex, which plays an important role in repair of DNA double-stranded breaks (DSBs). During G1 and S phase of the cell cycle, the complex functions downstream of TP53BP1 to promote non-homologous end joining (NHEJ) and suppress DNA end resection. Mediates various NHEJ-dependent processes including immunoglobulin class-switch recombination, and fusion of unprotected telomeres. May also regulate another aspect of cellular response to DNA damage through regulation of the JNK-mediated phosphorylation and activation of the transcriptional activator ELK1. Inhibits the FZR1- and probably CDC20-mediated activation of the anaphase promoting complex APC thereby regulating progression through the cell cycle. Regulates TCF7L2-mediated gene transcription and may play a role in epithelial-mesenchymal transdifferentiation. This Bos taurus (Bovine) protein is Mitotic spindle assembly checkpoint protein MAD2B (MAD2L2).